The following is a 308-amino-acid chain: Porphobilinogen deaminase (308 aa).

An S-(dipyrrolylmethanemethyl)cysteine modification is found at cysteine 241.

It belongs to the HMBS family. As to quaternary structure, monomer. Dipyrromethane is required as a cofactor.

It carries out the reaction 4 porphobilinogen + H2O = hydroxymethylbilane + 4 NH4(+). Its pathway is porphyrin-containing compound metabolism; protoporphyrin-IX biosynthesis; coproporphyrinogen-III from 5-aminolevulinate: step 2/4. Its function is as follows. Tetrapolymerization of the monopyrrole PBG into the hydroxymethylbilane pre-uroporphyrinogen in several discrete steps. This Staphylococcus aureus (strain Newman) protein is Porphobilinogen deaminase.